The following is a 324-amino-acid chain: D-alanine--D-alanine ligase (324 aa).

The ATP-grasp domain maps to 112–312 (KAVLAAAGVT…FDQLVLWIVE (201 aa)). 139–193 (LQPPYVVKPNAEGSSVGVFIIKEGANRPPEEVGAPSWTFGEEVMVEPYIQGMELA) contributes to the ATP binding site. Mg(2+) contacts are provided by Asp-265, Glu-279, and Asn-281.

This sequence belongs to the D-alanine--D-alanine ligase family. It depends on Mg(2+) as a cofactor. Mn(2+) is required as a cofactor.

It localises to the cytoplasm. It carries out the reaction 2 D-alanine + ATP = D-alanyl-D-alanine + ADP + phosphate + H(+). Its pathway is cell wall biogenesis; peptidoglycan biosynthesis. Its function is as follows. Cell wall formation. The polypeptide is D-alanine--D-alanine ligase (Caulobacter vibrioides (strain ATCC 19089 / CIP 103742 / CB 15) (Caulobacter crescentus)).